The sequence spans 370 residues: Histidinol-phosphate aminotransferase (370 aa).

Position 231 is an N6-(pyridoxal phosphate)lysine (lysine 231).

Belongs to the class-II pyridoxal-phosphate-dependent aminotransferase family. Histidinol-phosphate aminotransferase subfamily. As to quaternary structure, homodimer. The cofactor is pyridoxal 5'-phosphate.

It carries out the reaction L-histidinol phosphate + 2-oxoglutarate = 3-(imidazol-4-yl)-2-oxopropyl phosphate + L-glutamate. It functions in the pathway amino-acid biosynthesis; L-histidine biosynthesis; L-histidine from 5-phospho-alpha-D-ribose 1-diphosphate: step 7/9. This is Histidinol-phosphate aminotransferase from Paracidovorax citrulli (strain AAC00-1) (Acidovorax citrulli).